We begin with the raw amino-acid sequence, 1095 residues long: DNA-directed RNA polymerase subunit beta (1095 aa).

The segment at 1069–1095 (DLMQDVNPRRSTPSRPTYESLGKEYEE) is disordered.

It belongs to the RNA polymerase beta chain family. As to quaternary structure, in cyanobacteria the RNAP catalytic core is composed of 2 alpha, 1 beta, 1 beta', 1 gamma and 1 omega subunit. When a sigma factor is associated with the core the holoenzyme is formed, which can initiate transcription.

The catalysed reaction is RNA(n) + a ribonucleoside 5'-triphosphate = RNA(n+1) + diphosphate. Functionally, DNA-dependent RNA polymerase catalyzes the transcription of DNA into RNA using the four ribonucleoside triphosphates as substrates. This Prochlorococcus marinus (strain NATL1A) protein is DNA-directed RNA polymerase subunit beta.